Here is a 241-residue protein sequence, read N- to C-terminus: Ribonuclease 3 (241 aa).

Residues 16-144 enclose the RNase III domain; sequence HAEFEKKINY…VIGAIFQDGG (129 aa). A Mg(2+)-binding site is contributed by Glu57. Catalysis depends on residues Asp61 and Glu133. Glu133 is a binding site for Mg(2+). The DRBM domain maps to 171–240; that stretch reads DAKSRLQEIL…AALAIKKIES (70 aa).

The protein belongs to the ribonuclease III family. In terms of assembly, homodimer. Requires Mg(2+) as cofactor.

The protein resides in the cytoplasm. It catalyses the reaction Endonucleolytic cleavage to 5'-phosphomonoester.. In terms of biological role, digests double-stranded RNA. Involved in the processing of primary rRNA transcript to yield the immediate precursors to the large and small rRNAs (23S and 16S). Processes some mRNAs, and tRNAs when they are encoded in the rRNA operon. Processes pre-crRNA and tracrRNA of type II CRISPR loci if present in the organism. The chain is Ribonuclease 3 from Desulfotalea psychrophila (strain LSv54 / DSM 12343).